Consider the following 206-residue polypeptide: Ribosomal RNA small subunit methyltransferase G (206 aa).

S-adenosyl-L-methionine is bound by residues Gly-73, Leu-78, 124-125 (VE), and Arg-139.

Belongs to the methyltransferase superfamily. RNA methyltransferase RsmG family.

The protein resides in the cytoplasm. The enzyme catalyses guanosine(527) in 16S rRNA + S-adenosyl-L-methionine = N(7)-methylguanosine(527) in 16S rRNA + S-adenosyl-L-homocysteine. Specifically methylates the N7 position of guanine in position 527 of 16S rRNA. The chain is Ribosomal RNA small subunit methyltransferase G from Serratia proteamaculans (strain 568).